Here is a 338-residue protein sequence, read N- to C-terminus: 1-aminocyclopropane-1-carboxylate deaminase (338 aa).

The residue at position 51 (K51) is an N6-(pyridoxal phosphate)lysine. Catalysis depends on S78, which acts as the Nucleophile.

Belongs to the ACC deaminase/D-cysteine desulfhydrase family. As to quaternary structure, homotrimer. The cofactor is pyridoxal 5'-phosphate.

The enzyme catalyses 1-aminocyclopropane-1-carboxylate + H2O = 2-oxobutanoate + NH4(+). Catalyzes a cyclopropane ring-opening reaction, the irreversible conversion of 1-aminocyclopropane-1-carboxylate (ACC) to ammonia and alpha-ketobutyrate. Allows growth on ACC as a nitrogen source. This is 1-aminocyclopropane-1-carboxylate deaminase from Pseudomonas fluorescens.